Here is a 726-residue protein sequence, read N- to C-terminus: ORC ubiquitin ligase 1 (726 aa).

The segment at 18-56 (CHICLGKVRQPVICINNHVFCSICIDLWLKNNSQCPACR) adopts an RING-type; degenerate zinc-finger fold. Coiled-coil stretches lie at residues 87 to 129 (LRKT…TILD) and 155 to 270 (ETVA…MNSI). Ser-210 is modified (phosphoserine). 2 disordered regions span residues 276–334 (SADG…TSKA) and 436–460 (NVSN…ECFS). Residues 280 to 290 (KGSKGSEEDVV) are compositionally biased toward basic and acidic residues. Low complexity predominate over residues 304–318 (SSTSSSSHLAKPSSS). Over residues 319-334 (RLCDTSSARQESTSKA) the composition is skewed to polar residues. Residues 446–457 (DISRSENEKKSE) show a composition bias toward basic and acidic residues. Ser-526, Ser-553, Ser-561, Ser-568, and Ser-570 each carry phosphoserine. Disordered stretches follow at residues 570 to 602 (SSQG…DQLE) and 687 to 726 (QSPW…ATKS). Positions 579–588 (EPDKLEEKTE) are enriched in basic and acidic residues. Polar residues predominate over residues 589-602 (LNLSKGSLTNDQLE). Low complexity predominate over residues 713–726 (SSLSSASPSKATKS). Ser-719 and Ser-721 each carry phosphoserine.

In terms of assembly, associates with ORC complex. Binds to chromatin; association is cell cycle-regulated, absent from mitotic chromosomes, is associated with chromatin from G1 and partially released from chromatin from mid S-phase. In terms of processing, auto-ubiquitinated.

The protein resides in the chromosome. It catalyses the reaction S-ubiquitinyl-[E2 ubiquitin-conjugating enzyme]-L-cysteine + [acceptor protein]-L-lysine = [E2 ubiquitin-conjugating enzyme]-L-cysteine + N(6)-ubiquitinyl-[acceptor protein]-L-lysine.. In terms of biological role, E3 ubiquitin ligase essential for DNA replication origin activation during S phase. Acts as a replication origin selector which selects the origins to be fired and catalyzes the multi-mono-ubiquitination of a subset of chromatin-bound ORC3 and ORC5 during S-phase. This is ORC ubiquitin ligase 1 from Homo sapiens (Human).